Consider the following 470-residue polypeptide: MNPNQKLFALSGVAIALSIFNLLIGISNVVLNVSLHLKNNNDQDKNWTCTSITQNNTTLIENTYVNNTTVINKETEAAKQNYLMLNKSLCKVEGWVVVAKDNAIRFGESEQVIVTREPYVSCDPLGCRMYALHQGTTIRNKHSNGTIHDRTALRGLISTPLGSPPVVSNSDFLCVGWSSTSCHDGIGRMTICVQGNNDNATATVYYDRRLTTTIKTWARNILRTQESECVCHNGTCVVVMTDGSASSQAHTKVLYFHKGLIIKEEALKGSARHIEECSCYGHDSKVTCVCRDNWQGANRPVIEIDMNAMEHTSQYLCTGVLTDTSRPSDKSIGDCNNPITGSPGAPGVKGFGFLDSSNTWLGRTISPRSRSGFEMLKIPNAGTDPNSRITERQEIVDSNNWSGYSGSFIDYWDESSECYNPCFYVELIRGRPEEAKYVWWTSNSLVALCGSPVPVGSGSFPDGAQIQYFS.

Residues 1–6 (MNPNQK) lie on the Intravirion side of the membrane. Residues 7 to 27 (LFALSGVAIALSIFNLLIGIS) traverse the membrane as a helical segment. Positions 11 to 33 (SGVAIALSIFNLLIGISNVVLNV) are involved in apical transport and lipid raft association. Residues 28–470 (NVVLNVSLHL…PDGAQIQYFS (443 aa)) are Virion surface-facing. 7 N-linked (GlcNAc...) asparagine; by host glycosylation sites follow: Asn-32, Asn-46, Asn-55, Asn-56, Asn-66, Asn-67, and Asn-86. Residues 36–86 (HLKNNNDQDKNWTCTSITQNNTTLIENTYVNNTTVINKETEAAKQNYLMLN) form a hypervariable stalk region region. A head of neuraminidase region spans residues 89 to 470 (LCKVEGWVVV…PDGAQIQYFS (382 aa)). 8 cysteine pairs are disulfide-bonded: Cys-90–Cys-418, Cys-122–Cys-127, Cys-182–Cys-229, Cys-231–Cys-236, Cys-277–Cys-290, Cys-279–Cys-288, Cys-317–Cys-335, and Cys-422–Cys-449. Arg-116 is a binding site for substrate. The N-linked (GlcNAc...) asparagine; by host glycan is linked to Asn-144. The active-site Proton donor/acceptor is Asp-149. Residue Arg-150 coordinates substrate. Asn-199 and Asn-233 each carry an N-linked (GlcNAc...) asparagine; by host glycan. Residue 275–276 (EE) participates in substrate binding. Arg-291 provides a ligand contact to substrate. Asp-292, Gly-296, and Asp-323 together coordinate Ca(2+). Arg-370 is a substrate binding site. Asn-400 carries N-linked (GlcNAc...) asparagine; by host glycosylation. Tyr-404 (nucleophile) is an active-site residue.

The protein belongs to the glycosyl hydrolase 34 family. In terms of assembly, homotetramer. Requires Ca(2+) as cofactor. Post-translationally, N-glycosylated.

Its subcellular location is the virion membrane. It localises to the host apical cell membrane. The enzyme catalyses Hydrolysis of alpha-(2-&gt;3)-, alpha-(2-&gt;6)-, alpha-(2-&gt;8)- glycosidic linkages of terminal sialic acid residues in oligosaccharides, glycoproteins, glycolipids, colominic acid and synthetic substrates.. With respect to regulation, inhibited by the neuraminidase inhibitors zanamivir (Relenza) and oseltamivir (Tamiflu). These drugs interfere with the release of progeny virus from infected cells and are effective against all influenza strains. Resistance to neuraminidase inhibitors is quite rare. In terms of biological role, catalyzes the removal of terminal sialic acid residues from viral and cellular glycoconjugates. Cleaves off the terminal sialic acids on the glycosylated HA during virus budding to facilitate virus release. Additionally helps virus spread through the circulation by further removing sialic acids from the cell surface. These cleavages prevent self-aggregation and ensure the efficient spread of the progeny virus from cell to cell. Otherwise, infection would be limited to one round of replication. Described as a receptor-destroying enzyme because it cleaves a terminal sialic acid from the cellular receptors. May facilitate viral invasion of the upper airways by cleaving the sialic acid moieties on the mucin of the airway epithelial cells. Likely to plays a role in the budding process through its association with lipid rafts during intracellular transport. May additionally display a raft-association independent effect on budding. Plays a role in the determination of host range restriction on replication and virulence. Sialidase activity in late endosome/lysosome traffic seems to enhance virus replication. The polypeptide is Neuraminidase (Aves (Horse)).